Reading from the N-terminus, the 591-residue chain is Aspartate--tRNA ligase (591 aa).

L-aspartate is bound at residue Glu172. Residues 196 to 199 form an aspartate region; it reads QLFK. An L-aspartate-binding site is contributed by Arg218. Residues 218–220 and Gln227 contribute to the ATP site; that span reads RDE. His449 lines the L-aspartate pocket. Glu483 provides a ligand contact to ATP. L-aspartate is bound at residue Arg490. 535–538 serves as a coordination point for ATP; the sequence is GLDR.

Belongs to the class-II aminoacyl-tRNA synthetase family. Type 1 subfamily. As to quaternary structure, homodimer.

Its subcellular location is the cytoplasm. It catalyses the reaction tRNA(Asp) + L-aspartate + ATP = L-aspartyl-tRNA(Asp) + AMP + diphosphate. In terms of biological role, catalyzes the attachment of L-aspartate to tRNA(Asp) in a two-step reaction: L-aspartate is first activated by ATP to form Asp-AMP and then transferred to the acceptor end of tRNA(Asp). This Actinobacillus pleuropneumoniae serotype 5b (strain L20) protein is Aspartate--tRNA ligase.